The chain runs to 52 residues: MEKTQQQLIHEIEHIRKFLIDLGEDYPLHSHIVVSCSQKLDLLLNEFERTKE.

This is an uncharacterized protein from Halalkalibacterium halodurans (strain ATCC BAA-125 / DSM 18197 / FERM 7344 / JCM 9153 / C-125) (Bacillus halodurans).